We begin with the raw amino-acid sequence, 246 residues long: uncharacterized protein (246 aa).

The stretch at 204-243 (TTKLKKLEKEIHELPYMLINGKITYEEYKKRIREIEKEIG) forms a coiled coil.

This is an uncharacterized protein from Aquifex aeolicus (strain VF5).